The chain runs to 117 residues: uncharacterized protein (117 aa).

Helical transmembrane passes span alanine 43–leucine 63 and alanine 73–valine 93.

It is found in the cell membrane. This is an uncharacterized protein from Bacillus subtilis (strain 168).